Consider the following 1067-residue polypeptide: Probable importin-5 homolog (1067 aa).

HEAT repeat units lie at residues 3-34 (LQPI…YKNH), 42-75 (SFIV…SGNI), 93-120 (FAVR…QLVP), 125-152 (PEIL…LIGA), 164-197 (APHF…STFI), 206-243 (VFKP…IAQY), 251-286 (NFDM…FAEF), 295-347 (LYLE…HCVS), 349-381 (GLWE…SSIS), 385-425 (EKQI…ASYL), 427-466 (REMQ…LDEI), 468-508 (PNRV…VDGI), 510-553 (EEFT…GLAV), 555-596 (KKVF…AQCL), 598-658 (EDFI…AMEL), 661-703 (HLFP…SKQH), 718-757 (FTSR…MDIG), 763-826 (ADRI…CIQF), 832-869 (PYIA…ENGG), 876-909 (YPHI…AAEN), 917-960 (FLME…ITNL), 969-999 (PQTI…TLIR), 1008-1040 (QQYI…LALR), and 1041-1064 (SQES…LANF).

It belongs to the importin beta family. Importin beta-3 subfamily.

It is found in the cytoplasm. Its subcellular location is the nucleus. Functionally, functions in nuclear protein import as nuclear transport receptor. Serves as receptor for nuclear localization signals (NLS) in cargo substrates. This Dictyostelium discoideum (Social amoeba) protein is Probable importin-5 homolog.